Consider the following 127-residue polypeptide: uncharacterized protein (127 aa).

Residues methionine 1–threonine 46 form the HTH asnC-type domain.

Not known, symbiotically active. This is an uncharacterized protein from Sinorhizobium fredii (strain NBRC 101917 / NGR234).